The primary structure comprises 132 residues: Small ribosomal subunit protein eS24 (132 aa).

Over residues 90–100 (RLARHGLFEKK) the composition is skewed to basic and acidic residues. A disordered region spans residues 90–132 (RLARHGLFEKKKTSRKQRKERKNRMKKVRGTKKASVGASKKKD). Residues 101-121 (KTSRKQRKERKNRMKKVRGTK) are compositionally biased toward basic residues.

It belongs to the eukaryotic ribosomal protein eS24 family. As to quaternary structure, component of the small ribosomal subunit.

The protein resides in the cytoplasm. In terms of biological role, component of the small ribosomal subunit. The ribosome is a large ribonucleoprotein complex responsible for the synthesis of proteins in the cell. Required for processing of pre-rRNA and maturation of 40S ribosomal subunits. The polypeptide is Small ribosomal subunit protein eS24 (rps24) (Takifugu rubripes (Japanese pufferfish)).